A 387-amino-acid chain; its full sequence is tRNA-specific 2-thiouridylase MnmA (387 aa).

Residues alanine 6 to serine 13 and leucine 32 contribute to the ATP site. Catalysis depends on cysteine 101, which acts as the Nucleophile. A disulfide bridge links cysteine 101 with cysteine 199. Glycine 125 is an ATP binding site. The interval lysine 148–glutamine 150 is interaction with tRNA. Cysteine 199 (cysteine persulfide intermediate) is an active-site residue.

The protein belongs to the MnmA/TRMU family.

It localises to the cytoplasm. The catalysed reaction is S-sulfanyl-L-cysteinyl-[protein] + uridine(34) in tRNA + AH2 + ATP = 2-thiouridine(34) in tRNA + L-cysteinyl-[protein] + A + AMP + diphosphate + H(+). Its function is as follows. Catalyzes the 2-thiolation of uridine at the wobble position (U34) of tRNA, leading to the formation of s(2)U34. The protein is tRNA-specific 2-thiouridylase MnmA of Clavibacter michiganensis subsp. michiganensis (strain NCPPB 382).